Here is a 158-residue protein sequence, read N- to C-terminus: Secreted frizzled-related protein 1 (158 aa).

The 34-residue stretch at 1–34 folds into the FZ domain; sequence VRDSCEPVMQFFGFYWPEMLKCDKFPEGDVCIAM. Asparagine 38 carries an N-linked (GlcNAc...) asparagine glycan. Intrachain disulfides connect cysteine 51-cysteine 121 and cysteine 68-cysteine 123. The NTR domain maps to 51–158; sequence CPPCDNELKS…IHKWDKKNKE (108 aa).

This sequence belongs to the secreted frizzled-related protein (sFRP) family. As to quaternary structure, interacts with WNT4, WNT1, WNT2, WNT8, MYOC and FRZD6.

The protein resides in the secreted. Its function is as follows. Soluble frizzled-related proteins (sFRPS) function as modulators of Wnt signaling through direct interaction with Wnts. They have a role in regulating cell growth and differentiation in specific cell types. SFRP1 decreases intracellular beta-catenin levels. Has antiproliferative effects on vascular cells, in vitro and in vivo, and can induce, in vivo, an angiogenic response. In vascular cell cycle, delays the G1 phase and entry into the S phase. In kidney development, inhibits tubule formation and bud growth in metanephroi. Inhibits WNT1/WNT4-mediated TCF-dependent transcription. The polypeptide is Secreted frizzled-related protein 1 (Sfrp1) (Rattus norvegicus (Rat)).